The chain runs to 248 residues: Ureidoacrylate amidohydrolase RutB (248 aa).

D43 (proton acceptor) is an active-site residue. K152 is a catalytic residue. Residue C185 is the Nucleophile of the active site.

This sequence belongs to the isochorismatase family. RutB subfamily.

The catalysed reaction is (Z)-3-ureidoacrylate + H2O + H(+) = (Z)-3-aminoacrylate + NH4(+) + CO2. It carries out the reaction (Z)-3-ureidoacrylate + H2O = (Z)-3-aminoacrylate + carbamate + H(+). The enzyme catalyses (Z)-2-methylureidoacrylate + H2O + H(+) = (Z)-2-methylaminoacrylate + NH4(+) + CO2. Hydrolyzes ureidoacrylate to form aminoacrylate and carbamate. The carbamate hydrolyzes spontaneously, thereby releasing one of the nitrogen atoms of the pyrimidine ring as ammonia and one of its carbon atoms as CO2. This Serratia proteamaculans (strain 568) protein is Ureidoacrylate amidohydrolase RutB.